A 173-amino-acid polypeptide reads, in one-letter code: MGTPCHFALFDLQPCFRLDLDKLATRYRELAREVHPDRFADASEREQRVALEKSAALNDAYQTLRSAPRRARYLLAIGGHEVPQEVTVHDPDFLLQQMQWREELEELQDEADLDGVAVFKKRLKAAQEQLNEDFAACWDVPAERDKAERLMRRMQFLDKLAQEVRQLEERLDD.

The J domain occupies cysteine 5–isoleucine 77.

This sequence belongs to the HscB family. In terms of assembly, interacts with HscA and stimulates its ATPase activity.

Co-chaperone involved in the maturation of iron-sulfur cluster-containing proteins. Seems to help targeting proteins to be folded toward HscA. The sequence is that of Co-chaperone protein HscB homolog from Pseudomonas putida (strain W619).